A 697-amino-acid polypeptide reads, in one-letter code: Sodium-dependent phosphate transport protein 2B (697 aa).

Positions 1–45 (MAPWPELENAQPNPGKFIEGASGPQSSIPAKDKEASKTNDNGTPV) are disordered. Residues 1–91 (MAPWPELENA…WSERDTKGKT (91 aa)) are Cytoplasmic-facing. The chain crosses the membrane as a helical span at residues 92-112 (LCIFQGVGKFILLLGFLYLFV). The Extracellular portion of the chain corresponds to 113–136 (CSLDVLSSAFQLVGGKVAGQFFSN). A helical membrane pass occupies residues 137–157 (NSIMSNPVAGLVIGVLVTVMV). Residues 158–213 (QSSSTSSSIIVSMVASSLLTVRAAIPIIMGANIGTSITNTIVALMQAGDRNEFRRA) lie on the Cytoplasmic side of the membrane. The chain crosses the membrane as a helical span at residues 214–234 (FAGATVHDFFNWLSVFVLLPL). The Extracellular portion of the chain corresponds to 235-363 (EAATHYLEIL…FVNFSLPDLA (129 aa)). N-linked (GlcNAc...) asparagine glycans are attached at residues Asn295, Asn308, Asn321, and Asn356. Cys303 and Cys350 are disulfide-bonded. Residues 364-384 (VGIILLTVSLVVLCGCLIMIV) form a helical membrane-spanning segment. Residues 385 to 408 (KLLGSVLRGQVATVIKKTLNTDFP) lie on the Cytoplasmic side of the membrane. The chain crosses the membrane as a helical span at residues 409–429 (FPFAWLTGYLAILVGAGMTFI). The Extracellular portion of the chain corresponds to 430–486 (VQSSSVFTSAMTPLIGIGVISIERAYPLTLGSNIGTTTTAILAALASPGNTLRSSLQ). The helical transmembrane segment at 487–507 (IALCHFFFNISGILLWYPIPF) threads the bilayer. At 508–526 (TRLPIRLAKGLGNISAKYR) the chain is on the cytoplasmic side. The helical transmembrane segment at 527 to 547 (WFAVFYLIFFFFVTPLTVFGL) threads the bilayer. Over 548-551 (SLAG) the chain is Extracellular. A helical transmembrane segment spans residues 552–572 (WPVLVGVGVPIILLLLLVLCL). Residues 573–696 (RMLQFRCPRI…SMKALSNTTV (124 aa)) are Cytoplasmic-facing.

This sequence belongs to the SLC34A transporter family. Highly abundant in the ileum of small intestine, whereas it is almost absent in the duodenum and in the jejunum.

It localises to the apical cell membrane. It catalyses the reaction 3 Na(+)(out) + phosphate(out) = 3 Na(+)(in) + phosphate(in). Its function is as follows. Involved in actively transporting phosphate into cells via Na(+) cotransport. In Mus musculus (Mouse), this protein is Sodium-dependent phosphate transport protein 2B (Slc34a2).